We begin with the raw amino-acid sequence, 559 residues long: BTB/POZ domain-containing protein At5g47800 (559 aa).

The 69-residue stretch at 28 to 96 (NDLVIRINNT…CYDITINLSA (69 aa)) folds into the BTB domain. In terms of domain architecture, NPH3 spans 199 to 476 (DWWTEDISDL…VQALFFDQES (278 aa)). A Phosphotyrosine modification is found at Y417. The span at 477 to 489 (GSKGASSRSESQE) shows a compositional bias: low complexity. 2 disordered regions span residues 477 to 502 (GSKG…TDEH) and 524 to 559 (EGCK…SRDR). Composition is skewed to basic and acidic residues over residues 492–502 (TRGKETPTDEH) and 524–541 (EGCK…DPKK).

The protein belongs to the NPH3 family.

Its pathway is protein modification; protein ubiquitination. Functionally, may act as a substrate-specific adapter of an E3 ubiquitin-protein ligase complex (CUL3-RBX1-BTB) which mediates the ubiquitination and subsequent proteasomal degradation of target proteins. This chain is BTB/POZ domain-containing protein At5g47800, found in Arabidopsis thaliana (Mouse-ear cress).